A 121-amino-acid polypeptide reads, in one-letter code: Large ribosomal subunit protein bL12 (121 aa).

It belongs to the bacterial ribosomal protein bL12 family. Homodimer. Part of the ribosomal stalk of the 50S ribosomal subunit. Forms a multimeric L10(L12)X complex, where L10 forms an elongated spine to which 2 to 4 L12 dimers bind in a sequential fashion. Binds GTP-bound translation factors.

Functionally, forms part of the ribosomal stalk which helps the ribosome interact with GTP-bound translation factors. Is thus essential for accurate translation. The chain is Large ribosomal subunit protein bL12 from Escherichia coli O45:K1 (strain S88 / ExPEC).